The chain runs to 304 residues: tRNA pseudouridine synthase B (304 aa).

Residue Asp-38 is the Nucleophile of the active site.

This sequence belongs to the pseudouridine synthase TruB family. Type 1 subfamily.

It catalyses the reaction uridine(55) in tRNA = pseudouridine(55) in tRNA. In terms of biological role, responsible for synthesis of pseudouridine from uracil-55 in the psi GC loop of transfer RNAs. The sequence is that of tRNA pseudouridine synthase B from Listeria innocua serovar 6a (strain ATCC BAA-680 / CLIP 11262).